A 241-amino-acid polypeptide reads, in one-letter code: Small ribosomal subunit protein uS2 (241 aa).

This sequence belongs to the universal ribosomal protein uS2 family.

In Yersinia pestis bv. Antiqua (strain Antiqua), this protein is Small ribosomal subunit protein uS2.